Consider the following 816-residue polypeptide: Phosphatidylinositol 4-kinase beta (816 aa).

The tract at residues 1–30 is disordered; that stretch reads MGDTVVEPAPLKPTSEPTSGPPGNNGGSLL. Position 2 is an N-acetylglycine (Gly-2). The 214-residue stretch at 29–242 folds into the PIK helical domain; sequence LLSVITEGVG…GTKLRKLILS (214 aa). The interaction with ACBD3 stretch occupies residues 41-67; that stretch reads SVIDPEVAQKACQEVLEKVKLLHGGVA. Disordered regions lie at residues 101-120 and 248-318; these read EDEM…RRRR and AHRK…SFSS. The residue at position 258 (Ser-258) is a Phosphoserine. Thr-263 carries the post-translational modification Phosphothreonine. Phosphoserine occurs at positions 266, 275, 277, 284, and 294. Composition is skewed to polar residues over residues 278 to 297 and 306 to 318; these read DATA…SNPK and SSST…SFSS. Ser-428 carries the post-translational modification Phosphoserine. Thr-438 carries the post-translational modification Phosphothreonine. Phosphoserine is present on Ser-511. Phosphothreonine is present on residues Thr-517 and Thr-519. A PI3K/PI4K catalytic domain is found at 535–801; it reads EPWQEKVRRI…MVDGSMRSIT (267 aa). Residues 541–547 are G-loop; the sequence is VRRIREG. The catalytic loop stretch occupies residues 668 to 676; the sequence is QVKDRHNGN. The tract at residues 687–711 is activation loop; that stretch reads HIDFGFILSSSPRNLGFETSAFKLT.

Belongs to the PI3/PI4-kinase family. Type III PI4K subfamily. In terms of assembly, interacts with ARF1 and ARF3 in the Golgi complex, but not with ARF4, ARF5 or ARF6. Interacts with NCS1/FREQ in a calcium-independent manner. Interacts with CALN1/CABP8 and CALN2/CABP7; in a calcium-dependent manner; this interaction competes with NCS1/FREQ binding. Interacts with ACBD3. Interacts with ARMH3, YWHAB, YWHAE, YWHAG, YWHAH, YWHAQ, YWHAZ and SFN. Interacts with GGA2 (via VHS domain); the interaction is important for PI4KB location at the Golgi apparatus membrane. Interacts with ATG9A. (Microbial infection) Interacts with Aichi virus protein 3A. Part of a complex Aichi virus protein 3A/ACBD3/PI4KB that allows the synthesis of PI4P at the viral RNA replication sites. The cofactor is Mg(2+). Requires Mn(2+) as cofactor. In terms of tissue distribution, widely expressed with highest levels in heart, skeletal muscle, pancreas, testis and ovary. Weakly expressed in liver. Expressed in the innear ear in the epithelium of the spinal organ of corti.

The protein localises to the endomembrane system. It localises to the mitochondrion outer membrane. The protein resides in the rough endoplasmic reticulum membrane. It is found in the golgi apparatus. Its subcellular location is the golgi apparatus membrane. The protein localises to the cytoplasm. It localises to the perinuclear region. The catalysed reaction is a 1,2-diacyl-sn-glycero-3-phospho-(1D-myo-inositol) + ATP = a 1,2-diacyl-sn-glycero-3-phospho-(1D-myo-inositol 4-phosphate) + ADP + H(+). Inhibited by wortmannin and adenosine. Increased kinase activity upon interaction with NCS1/FREQ. With respect to regulation, (Microbial infection) Activated by Aichi virus protein 3A, this activation is sensitized by ACBD3. Phosphorylates phosphatidylinositol (PI) in the first committed step in the production of the second messenger inositol-1,4,5,-trisphosphate (PIP). May regulate Golgi disintegration/reorganization during mitosis, possibly via its phosphorylation. Involved in Golgi-to-plasma membrane trafficking. May play an important role in the inner ear development. In terms of biological role, (Microbial infection) Plays an essential role in Aichi virus RNA replication. Recruited by ACBD3 at the viral replication sites. Functionally, (Microbial infection) Required for cellular spike-mediated entry of human coronavirus SARS-CoV. In Homo sapiens (Human), this protein is Phosphatidylinositol 4-kinase beta.